Consider the following 119-residue polypeptide: Large ribosomal subunit protein uL22c (119 aa).

The protein belongs to the universal ribosomal protein uL22 family. Part of the 50S ribosomal subunit.

The protein resides in the plastid. Its subcellular location is the chloroplast. Functionally, this protein binds specifically to 23S rRNA. In terms of biological role, the globular domain of the protein is located near the polypeptide exit tunnel on the outside of the subunit, while an extended beta-hairpin is found that lines the wall of the exit tunnel in the center of the 70S ribosome. The polypeptide is Large ribosomal subunit protein uL22c (rpl22) (Angiopteris evecta (Mule's foot fern)).